We begin with the raw amino-acid sequence, 339 residues long: N-acetylornithine carbamoyltransferase (339 aa).

Carbamoyl phosphate is bound by residues 49-52 (SMRT), Trp77, and Arg112. Glu144 lines the N(2)-acetyl-L-ornithine pocket. 148-151 (HPCQ) contacts carbamoyl phosphate. 2 residues coordinate N(2)-acetyl-L-ornithine: Lys252 and Leu295. 294 to 295 (CL) is a binding site for carbamoyl phosphate. Lys302 carries the post-translational modification N6-carboxylysine. Carbamoyl phosphate is bound at residue Arg322.

The protein belongs to the aspartate/ornithine carbamoyltransferase superfamily. AOTCase family. Homotrimer.

The protein resides in the cytoplasm. It catalyses the reaction N(2)-acetyl-L-ornithine + carbamoyl phosphate = N(2)-acetyl-L-citrulline + phosphate + H(+). It functions in the pathway amino-acid biosynthesis; L-arginine biosynthesis. Carboxylation at Lys-302 increases the catalytic activity of the enzyme. Is potently inhibited by N(alpha)-acetyl-N(delta)-phosphonoacetyl-L-ornithine (PALAO). In terms of biological role, catalyzes the transfer of the carbamoyl group from carbamoyl phosphate to the delta-amino group of N(2)-acetyl-L-ornithine to produce N(2)-acetyl-L-citrulline. This is a step in an alternative arginine biosynthesis pathway. The enzyme has no activity with ornithine. This chain is N-acetylornithine carbamoyltransferase, found in Xanthomonas campestris pv. campestris (strain ATCC 33913 / DSM 3586 / NCPPB 528 / LMG 568 / P 25).